The primary structure comprises 364 residues: DNA polymerase IV (364 aa).

The UmuC domain occupies 7–187 (IIHVDMDAFY…LPVNRVPGVG (181 aa)). Positions 11 and 105 each coordinate Mg(2+). The active site involves Glu106.

Belongs to the DNA polymerase type-Y family. As to quaternary structure, monomer. Mg(2+) serves as cofactor.

It localises to the cytoplasm. It catalyses the reaction DNA(n) + a 2'-deoxyribonucleoside 5'-triphosphate = DNA(n+1) + diphosphate. In terms of biological role, poorly processive, error-prone DNA polymerase involved in untargeted mutagenesis. Copies undamaged DNA at stalled replication forks, which arise in vivo from mismatched or misaligned primer ends. These misaligned primers can be extended by PolIV. Exhibits no 3'-5' exonuclease (proofreading) activity. May be involved in translesional synthesis, in conjunction with the beta clamp from PolIII. The chain is DNA polymerase IV from Stenotrophomonas maltophilia (strain K279a).